A 343-amino-acid chain; its full sequence is Methionine import ATP-binding protein MetN (343 aa).

One can recognise an ABC transporter domain in the interval 2-241 (IKLSNITKVF…PKTPLAQKFI (240 aa)). 40-46 (SGAGKST) is an ATP binding site. The tract at residues 265–343 (CVPMLRLEFT…HVKVEVLGYV (79 aa)) is C2 domain. L-methionine-binding positions include 278-283 (VDAPLL) and 295-296 (NI).

This sequence belongs to the ABC transporter superfamily. Methionine importer (TC 3.A.1.24) family. As to quaternary structure, the complex is composed of two ATP-binding proteins (MetN), two transmembrane proteins (MetI) and a solute-binding protein (MetQ).

Its subcellular location is the cell inner membrane. The enzyme catalyses L-methionine(out) + ATP + H2O = L-methionine(in) + ADP + phosphate + H(+). It catalyses the reaction D-methionine(out) + ATP + H2O = D-methionine(in) + ADP + phosphate + H(+). ATPase activity is inhibited by intracellular L-methionine. Binding of methionine to the dimerized C-terminal regulatory domain stabilizes an inward-facing, ATPase-inactive conformation of the transporter, and as a consequence, the rate of ATP hydrolysis decreases. ADP is a competitive inhibitor. Its function is as follows. Part of the ABC transporter complex MetNIQ involved in methionine import. Responsible for energy coupling to the transport system. It has also been shown to be involved in formyl-L-methionine transport. The sequence is that of Methionine import ATP-binding protein MetN from Escherichia coli (strain K12).